The primary structure comprises 331 residues: Gamma-parvin (331 aa).

Residue Met-1 is modified to N-acetylmethionine. The segment at 17–39 (EPPAEEELSKGGKKKYLPPTSRK) is disordered. 2 Calponin-homology (CH) domains span residues 44–151 (EELQ…KRFQ) and 210–317 (NAVK…CKHT).

This sequence belongs to the parvin family. In terms of assembly, interacts with ILK; the interaction promotes the establishment of cell polarity required for leukocyte migration. Interacts with ARHGEF6; the guanine nucleotide exchange factor activity of ARHGEF6 is essential for the PARVG-induced enhancement of cell spreading. In terms of tissue distribution, expressed predominantly in lymphoid organs, including spleen, thymus, lymph node, bone marrow and peripheral blood leukocytes and moderately in the digestive tract, including stomach, duodenum, jejunum, ileum, ileocecum and appendix, as well as in lung and liver. Also expressed in tumors, but at a lower level than in the corresponding normal tissues.

The protein resides in the cell junction. Its subcellular location is the focal adhesion. It localises to the cell membrane. The protein localises to the cytoplasm. It is found in the cytoskeleton. Functionally, plays a role with ILK in promoting the cell adhesion and spreading of leukocytes. The polypeptide is Gamma-parvin (PARVG) (Homo sapiens (Human)).